A 276-amino-acid polypeptide reads, in one-letter code: Transcriptional antiactivator ExsD (276 aa).

As to quaternary structure, can form homotrimer. Interacts with ExsA; this interaction inhibits ExsA activity. Interacts with ExsC; this interaction dissociates the ExsD-ExsA complex.

Negative regulator of the type III secretion system regulon. Acts by disrupting transcriptional activator ExsA self-association and DNA-binding activity in absence of inducing signals. Upon host cell contact, this interaction is disrupted by the anti-antiactivator protein ExsC leading to ExsA activation. The sequence is that of Transcriptional antiactivator ExsD (exsD) from Pseudomonas aeruginosa (strain ATCC 15692 / DSM 22644 / CIP 104116 / JCM 14847 / LMG 12228 / 1C / PRS 101 / PAO1).